The sequence spans 109 residues: Profilin (109 aa).

It belongs to the profilin family. In terms of assembly, multimer. Occurs in many kinds of cells as a complex with monomeric actin in a 1:1 ratio.

The protein resides in the cytoplasm. Its subcellular location is the cytoskeleton. Its function is as follows. Binds to actin and affects the structure of the cytoskeleton. At high concentrations, profilin prevents the polymerization of actin, whereas it enhances it at low concentrations. By binding to PIP2, it inhibits the formation of IP3 and DG. In Actinidia deliciosa (Kiwi), this protein is Profilin.